The primary structure comprises 354 residues: Photosystem II protein D1 1 (354 aa).

The next 3 helical transmembrane spans lie at 29-46 (YIGW…TATT), 118-133 (HFLI…EWEL), and 142-156 (WIAV…AATA). Histidine 118 serves as a coordination point for chlorophyll a. Tyrosine 126 serves as a coordination point for pheophytin a. Positions 170 and 189 each coordinate [CaMn4O5] cluster. The chain crosses the membrane as a helical span at residues 197–218 (FHQLGVAGVFGGALFSAMHGSL). Position 198 (histidine 198) interacts with chlorophyll a. Residues histidine 215 and 264–265 (SF) contribute to the a quinone site. Residue histidine 215 coordinates Fe cation. Position 272 (histidine 272) interacts with Fe cation. The helical transmembrane segment at 274 to 288 (FLAAWPVIGIWFTAL) threads the bilayer. Positions 332, 333, 342, and 344 each coordinate [CaMn4O5] cluster. Positions 345–354 (AVEVAPAIRG) are excised as a propeptide.

This sequence belongs to the reaction center PufL/M/PsbA/D family. In terms of assembly, PSII is composed of 1 copy each of membrane proteins PsbA, PsbB, PsbC, PsbD, PsbE, PsbF, PsbH, PsbI, PsbJ, PsbK, PsbL, PsbM, PsbT, PsbX, PsbY, PsbZ, Psb30/Ycf12, peripheral proteins PsbO, CyanoQ (PsbQ), PsbU, PsbV and a large number of cofactors. It forms dimeric complexes. The D1/D2 heterodimer binds P680, chlorophylls that are the primary electron donor of PSII, and subsequent electron acceptors. It shares a non-heme iron and each subunit binds pheophytin, quinone, additional chlorophylls, carotenoids and lipids. D1 provides most of the ligands for the Mn4-Ca-O5 cluster of the oxygen-evolving complex (OEC). There is also a Cl(-1) ion associated with D1 and D2, which is required for oxygen evolution. The PSII complex binds additional chlorophylls, carotenoids and specific lipids. serves as cofactor. Tyr-161 forms a radical intermediate that is referred to as redox-active TyrZ, YZ or Y-Z. In terms of processing, C-terminally processed by CtpA; processing is essential to allow assembly of the oxygen-evolving complex and thus photosynthetic growth.

Its subcellular location is the cellular thylakoid membrane. It carries out the reaction 2 a plastoquinone + 4 hnu + 2 H2O = 2 a plastoquinol + O2. Its function is as follows. Photosystem II (PSII) is a light-driven water:plastoquinone oxidoreductase that uses light energy to abstract electrons from H(2)O, generating O(2) and a proton gradient subsequently used for ATP formation. It consists of a core antenna complex that captures photons, and an electron transfer chain that converts photonic excitation into a charge separation. The D1/D2 (PsbA/PsbD) reaction center heterodimer binds P680, the primary electron donor of PSII as well as several subsequent electron acceptors. This is Photosystem II protein D1 1 from Synechococcus sp. (strain JA-3-3Ab) (Cyanobacteria bacterium Yellowstone A-Prime).